We begin with the raw amino-acid sequence, 452 residues long: MTCYRGFLLGSCRRVAGGRAALRGSGSGADGRRHLGHGQPRELAGGGSPADGGFRPSRVVVVAKTTRYEFEQQRYRYAELSEEDLKQLLALKGSSYSGLLERHHIHTKNVEHIIDSLRDEGIEVRLVKRREYDEETVRWADAVIAAGGDGTMLLAASKVLDRLKPVIGVNTDPERSEGHLCLPVRYTHSFPEALRRFSRGEFRWLWRQRIRLYLEGTGINPTPVDLHEQQLSLNQHSRAFNIERAHDERSEASGPQLLPVRALNEVFIGESLSSRMPYCWAVAVDNLRRDIPNLKGLASYYEISVDDGPWEKQKSSGLNLCTGTGSKAWSFNINRVAAQAVEDVLHIARRQGNLTLPLNKDLVEKVTNEYNESLLYSPEEPKILFSIREPIANRVFSSSRQRCFSSKVCVRSRCWDACMVVDGGTSFEFNDGAIASMMINKEDELRTVILEQ.

A mitochondrion-targeting transit peptide spans 1–50 (MTCYRGFLLGSCRRVAGGRAALRGSGSGADGRRHLGHGQPRELAGGGSPA). Residues 23 to 52 (RGSGSGADGRRHLGHGQPRELAGGGSPADG) form a disordered region. At Lys64 the chain carries N6-acetyllysine; alternate. The residue at position 64 (Lys64) is an N6-succinyllysine; alternate. Ser176 is modified (phosphoserine). An N6-succinyllysine modification is found at Lys312. Lys327 is subject to N6-acetyllysine; alternate. Lys327 is modified (N6-succinyllysine; alternate). At Ser377 the chain carries Phosphoserine. At Lys407 the chain carries N6-acetyllysine.

It belongs to the NAD kinase family. In terms of assembly, homodimer.

It localises to the mitochondrion. It catalyses the reaction NAD(+) + ATP = ADP + NADP(+) + H(+). With respect to regulation, inhibited by NADH, NADPH and NADP(+). Mitochondrial NAD(+) kinase that phosphorylates NAD(+) to yield NADP(+). Can use both ATP or inorganic polyphosphate as the phosphoryl donor. In Mus musculus (Mouse), this protein is NAD kinase 2, mitochondrial (Nadk2).